Here is a 420-residue protein sequence, read N- to C-terminus: RING finger protein 39 (420 aa).

The RING-type zinc finger occupies 88–135; that stretch reads CPLCGGSFEDPVLLACEHSFCRACLARRWGTPPATDTEASPTACPCCG. Disordered stretches follow at residues 166–186 and 246–265; these read PGARAGRRRGGRIPTMGCLDP and DRRSVQLAPPGTPAPPDGPK. The B30.2/SPRY domain maps to 210 to 420; it reads DDLPEDYPVV…APLRIVPAES (211 aa).

It localises to the cytoplasm. The enzyme catalyses S-ubiquitinyl-[E2 ubiquitin-conjugating enzyme]-L-cysteine + [acceptor protein]-L-lysine = [E2 ubiquitin-conjugating enzyme]-L-cysteine + N(6)-ubiquitinyl-[acceptor protein]-L-lysine.. It functions in the pathway protein modification; protein ubiquitination. Its function is as follows. Plays an inhibitory role in anti-RNA viral innate immunity by targeting the adapter DDX3X and promoting its 'Lys-48'-linked polyubiquitination. Alternatively, enhances the cGAS-STING pathway activation by promoting 'Lys-63'-linked ubiquitination of STING1, facilitating the STING1-TBK1 complex formation and STING1 activation. The sequence is that of RING finger protein 39 (RNF39) from Macaca mulatta (Rhesus macaque).